Here is a 441-residue protein sequence, read N- to C-terminus: MVPLNQAFLISPSAPYGEFSIPPSKSHSLRAILFASLSKGTSIINNSLSSPDTDTMLSACKKFGARITRVGETLHIQGNPPPYSQYSSHHFHMGNSGIALRFLTALSSLSPSPILITGAHTLKRRPIEPLLSSLEQLGSEIRQKKSSSIPFVIRGPISSGHVTISGQDSQYASALAITAAVAPHPLSFSIENLKERPWFDLTLDWLHSLNISFSREQDSLFFPGAQSIKSFSYSVPGDYSSAAFLAALGLLSSSSNPTVLYNLPSKDPQGDKQLFSLLKSLGADIVIEKDHIEIRPSSFSGGVIDMDPFIDALPILAVLCCFAKNPSHLYNALGARDKESNRIEAIAHELRKMGGSVHPTQDGLYIEPSRLHGAVVHSHNDHRIAMALAVAGVHASSGQTLLCNTQCVNKSFPHFVIAAQTLHANIRHHQADFSLRSSLCR.

The 3-phosphoshikimate site is built by lysine 25, serine 26, and arginine 30. Lysine 25 is a binding site for phosphoenolpyruvate. Positions 97 and 125 each coordinate phosphoenolpyruvate. 3-phosphoshikimate contacts are provided by serine 169, glutamine 170, aspartate 311, and lysine 338. Glutamine 170 lines the phosphoenolpyruvate pocket. The active-site Proton acceptor is aspartate 311. Residues arginine 342, arginine 383, and lysine 410 each coordinate phosphoenolpyruvate.

It belongs to the EPSP synthase family. As to quaternary structure, monomer.

It is found in the cytoplasm. The enzyme catalyses 3-phosphoshikimate + phosphoenolpyruvate = 5-O-(1-carboxyvinyl)-3-phosphoshikimate + phosphate. The protein operates within metabolic intermediate biosynthesis; chorismate biosynthesis; chorismate from D-erythrose 4-phosphate and phosphoenolpyruvate: step 6/7. Functionally, catalyzes the transfer of the enolpyruvyl moiety of phosphoenolpyruvate (PEP) to the 5-hydroxyl of shikimate-3-phosphate (S3P) to produce enolpyruvyl shikimate-3-phosphate and inorganic phosphate. This Chlamydia muridarum (strain MoPn / Nigg) protein is 3-phosphoshikimate 1-carboxyvinyltransferase.